A 356-amino-acid polypeptide reads, in one-letter code: Malate dehydrogenase, glyoxysomal (356 aa).

The N-terminal 36 residues, 1–36 (MQPIPDVNQRIARISAHLHPPKSQMEESSALRRANC), are a transit peptide targeting the glyoxysome. NAD(+) is bound by residues 51 to 57 (GAAGGIG) and Asp-77. Residues Arg-124 and Arg-130 each coordinate substrate. Residues Asn-137 and 160 to 162 (ISN) contribute to the NAD(+) site. The substrate site is built by Asn-162 and Arg-196. Residue His-220 is the Proton acceptor of the active site. Met-271 serves as a coordination point for NAD(+).

It belongs to the LDH/MDH superfamily. MDH type 1 family. In terms of assembly, homodimer.

It is found in the glyoxysome. It carries out the reaction (S)-malate + NAD(+) = oxaloacetate + NADH + H(+). This is Malate dehydrogenase, glyoxysomal from Citrullus lanatus (Watermelon).